We begin with the raw amino-acid sequence, 478 residues long: MKKSAIILSKIILILTLLLSFGMSWNNVFSNTKNSIVSREISPSLAPMLEKVMPSVISINIEGSAITRTSRLPHQFQPFFGDNSPFCQGNSPFRHSPFCHINPDSDDKKEKFRALGSGVIINADKGYAVTNNHVVENANKIQVQLSDGRRYEARVIGKDSRSDIALIQLKNANNLSEIKIADSDNLRVGDYTVAIGNPYGLGETVTSGIISALGRSGLNIEHYENFIQTDAAINRGNSGGALVNLKGELIGINTAILAPDGGNIGIGFAIPCNMVKNLTAQMVQFGQVRRGELGIMGMELNSDLAQIMKINSQKGAFVSRVLPNSSAFEAGIKAGDIIISLNRKPISSFSSLRAEIGSLPVATKMELGVFREGRIKNITVELKHSVKHNLNSENDYIGIEGVDLSDYIFNEQKVIKVDNVKPHTPASKIGFKKDDIILNVNQKLISNVDELKKFLHSKPKILVFNIKRGNDTIYLVSE.

A signal peptide spans 1 to 26 (MKKSAIILSKIILILTLLLSFGMSWN). Cys-87 and Cys-99 are oxidised to a cystine. Residues 116–254 (GSGVIINADK…LKGELIGINT (139 aa)) are serine protease. Residues His-133, Asp-163, and Ser-238 each act as charge relay system in the active site. PDZ domains are found at residues 281–372 (QMVQ…VFRE) and 387–469 (KHNL…IKRG).

The protein belongs to the peptidase S1C family.

This Buchnera aphidicola subsp. Acyrthosiphon pisum (strain APS) (Acyrthosiphon pisum symbiotic bacterium) protein is Probable serine protease do-like (degP).